The sequence spans 547 residues: Chaperonin GroEL (547 aa).

ATP-binding positions include threonine 30–proline 33, lysine 51, aspartate 87–threonine 91, glycine 415, and aspartate 496.

It belongs to the chaperonin (HSP60) family. In terms of assembly, forms a cylinder of 14 subunits composed of two heptameric rings stacked back-to-back. Interacts with the co-chaperonin GroES.

The protein resides in the cytoplasm. The enzyme catalyses ATP + H2O + a folded polypeptide = ADP + phosphate + an unfolded polypeptide.. Together with its co-chaperonin GroES, plays an essential role in assisting protein folding. The GroEL-GroES system forms a nano-cage that allows encapsulation of the non-native substrate proteins and provides a physical environment optimized to promote and accelerate protein folding. The sequence is that of Chaperonin GroEL from Actinobacillus pleuropneumoniae (Haemophilus pleuropneumoniae).